A 624-amino-acid polypeptide reads, in one-letter code: DNA mismatch repair protein MutL (624 aa).

A disordered region spans residues leucine 416–lysine 436.

It belongs to the DNA mismatch repair MutL/HexB family.

Functionally, this protein is involved in the repair of mismatches in DNA. It is required for dam-dependent methyl-directed DNA mismatch repair. May act as a 'molecular matchmaker', a protein that promotes the formation of a stable complex between two or more DNA-binding proteins in an ATP-dependent manner without itself being part of a final effector complex. In Chlorobaculum tepidum (strain ATCC 49652 / DSM 12025 / NBRC 103806 / TLS) (Chlorobium tepidum), this protein is DNA mismatch repair protein MutL.